Here is a 787-residue protein sequence, read N- to C-terminus: Transcriptional corepressor LEUNIG_HOMOLOG (787 aa).

Residues 1–88 (MAQSNWEADK…IEAQQGKAKE (88 aa)) form a required for SEU-binding region. Positions 8 to 40 (ADKMLDVYIYDYLVKKKLHNTAKSFMTEGKVSP) constitute a LisH domain. Residues 77–106 (AYIEAQQGKAKEQQMQIQQLQMMRQAQMQR) adopt a coiled-coil conformation. Positions 299–413 (NMTNSPMYGG…TPSTHTPVDG (115 aa)) are disordered. Low complexity-rich tracts occupy residues 336 to 346 (SIGSPMQSSSS) and 355 to 372 (QQSS…QSQQ). The span at 380-409 (PSSSGPANSTGTGNTVGPSNSQPSTPSTHT) shows a compositional bias: polar residues. 7 WD repeats span residues 508–547 (KSAS…VEST), 550–589 (EHAH…YFLR), 593–633 (GHAA…VRAV), 635–671 (GAST…KRVN), 675–715 (GHSS…HELS), 717–755 (SGNK…CMTV), and 757–787 (GHEC…KIWK).

As to quaternary structure, forms corepressor complexes with SLK1 and SLK2; LUH is the transcription repressor subunit and SLK1 and SLK2 the specific DNA-binding adapters. Interacts with SEU. Binds to YAB3, YAB5 and YAB1/FIL; these complexes promote adaxial cell identity in leaves as well as embryonic shoot apical meristem (SAM) initiation and postembryonic SAM maintenance. In terms of tissue distribution, expressed in roots, stems, leaves, seedlings, apex, flowers, siliques, flower organs and seeds (including seed coat).

It localises to the nucleus. Transcription repressor subunit of the SEU-SLK1 and SEU-SLK2 transcriptional corepressor of abiotic stress (e.g. salt and osmotic stress) response genes, by means of an epigenetic process involving histone modification (e.g. H3K9 and H3K14 acetylation), probably by recruiting HDAC, to facilitate the condensation of chromatin thus preventing transcription at the target genes. Can also act as a transcription activator. Implicated in embryo and floral development. Involved in post-synthesis cell wall modifications necessary for mucilage extrusion from seeds upon imbibition, probably by promoting the expression of genes required for mucilage maturation (e.g. MUM2). Regulates the maintenance on leaf polarity and meristem activity as well as the initiation of embryonic shoot apical meristem (SAM) development. In Arabidopsis thaliana (Mouse-ear cress), this protein is Transcriptional corepressor LEUNIG_HOMOLOG.